A 293-amino-acid chain; its full sequence is Protease HtpX (293 aa).

Transmembrane regions (helical) follow at residues 4 to 24 (IALF…ILSL) and 32 to 52 (VMGL…VSLL). A Zn(2+)-binding site is contributed by His139. Glu140 is an active-site residue. A Zn(2+)-binding site is contributed by His143. The next 2 membrane-spanning stretches (helical) occupy residues 158–178 (IVNT…AGFM) and 193–213 (MVYF…ASTI). Glu222 contacts Zn(2+).

Belongs to the peptidase M48B family. Zn(2+) serves as cofactor.

Its subcellular location is the cell inner membrane. The protein is Protease HtpX of Erwinia tasmaniensis (strain DSM 17950 / CFBP 7177 / CIP 109463 / NCPPB 4357 / Et1/99).